The following is a 138-amino-acid chain: 1,4-dihydroxy-2-naphthoyl-CoA hydrolase (138 aa).

The active site involves Asp-13.

Belongs to the 4-hydroxybenzoyl-CoA thioesterase family. DHNA-CoA hydrolase subfamily.

The catalysed reaction is 1,4-dihydroxy-2-naphthoyl-CoA + H2O = 1,4-dihydroxy-2-naphthoate + CoA + H(+). It functions in the pathway cofactor biosynthesis; phylloquinone biosynthesis. The protein operates within quinol/quinone metabolism; 1,4-dihydroxy-2-naphthoate biosynthesis; 1,4-dihydroxy-2-naphthoate from chorismate: step 7/7. Its function is as follows. Catalyzes the hydrolysis of 1,4-dihydroxy-2-naphthoyl-CoA (DHNA-CoA) to 1,4-dihydroxy-2-naphthoate (DHNA), a reaction involved in phylloquinone (vitamin K1) biosynthesis. This Microcystis aeruginosa (strain NIES-843 / IAM M-2473) protein is 1,4-dihydroxy-2-naphthoyl-CoA hydrolase.